Here is a 298-residue protein sequence, read N- to C-terminus: Small ribosomal subunit protein uS3 (298 aa).

Residues 38-106 (IRRRLSRGME…QVQLNILEVK (69 aa)) form the KH type-2 domain. The interval 212–298 (KQKQQESEVR…EPRADEKTEG (87 aa)) is disordered. Basic and acidic residues predominate over residues 214 to 237 (KQQESEVRPPRGERGERGGRPERG). Polar residues predominate over residues 265–278 (GSAQSPEQAQTSGD).

Belongs to the universal ribosomal protein uS3 family. As to quaternary structure, part of the 30S ribosomal subunit. Forms a tight complex with proteins S10 and S14.

Functionally, binds the lower part of the 30S subunit head. Binds mRNA in the 70S ribosome, positioning it for translation. The chain is Small ribosomal subunit protein uS3 from Saccharopolyspora erythraea (strain ATCC 11635 / DSM 40517 / JCM 4748 / NBRC 13426 / NCIMB 8594 / NRRL 2338).